Consider the following 396-residue polypeptide: MSGDEVQFHENYDDYITYLKRRIRQLELQVRMLEADKERLERELSRLRSEMSRLRQPPAFAGTVIEVLDDDRAIVQNYNGPRFVVRIAPWIERDKLRPGARVALDQRTMAIIELLPSSKDPTVLGFEVIERPNVTYNDIGGLKKQLQELREAIELPLKHPELFEEVGIDPPKGVLLYGPPGCGKTLMAKALAHEVNATFIRVVGSELVRKYIGEGARLVHELFELAKEKAPTIIFIDEIDAIGAKRMDETTGGEREVNRTLMQLLAEMDGFDPRGNVKVIAATNRPDILDPALLRPGRFDRLIEVPLPDFEGRLEILKVHTRRMKLKNVDLRVIAEITEGASGADLKAIATEAGMFAIRERRTYVTQEDFLKAVDKVLGNERKLLQQITSHEIIYG.

Residues isoleucine 16 to proline 57 are a coiled coil. Residues glycine 181–leucine 186 and histidine 320 each bind ATP. A docks into pockets in the proteasome alpha-ring to cause gate opening region spans residues isoleucine 394–glycine 396.

The protein belongs to the AAA ATPase family. Homohexamer. The hexameric complex has a two-ring architecture resembling a top hat that caps the 20S proteasome core at one or both ends. Upon ATP-binding, the C-terminus of PAN interacts with the alpha-rings of the proteasome core by binding to the intersubunit pockets.

The protein localises to the cytoplasm. Its function is as follows. ATPase which is responsible for recognizing, binding, unfolding and translocation of substrate proteins into the archaeal 20S proteasome core particle. Is essential for opening the gate of the 20S proteasome via an interaction with its C-terminus, thereby allowing substrate entry and access to the site of proteolysis. Thus, the C-termini of the proteasomal ATPase function like a 'key in a lock' to induce gate opening and therefore regulate proteolysis. Unfolding activity requires energy from ATP hydrolysis, whereas ATP binding alone promotes ATPase-20S proteasome association which triggers gate opening, and supports translocation of unfolded substrates. This is Proteasome-activating nucleotidase from Pyrococcus abyssi (strain GE5 / Orsay).